The chain runs to 372 residues: UDP-N-acetylglucosamine 2-epimerase (372 aa).

Residues Arg10, Lys15, Asp95, Glu117, His212, Gln270, Phe275, 289 to 291 (SGG), Glu295, and Arg312 contribute to the substrate site.

It belongs to the UDP-N-acetylglucosamine 2-epimerase family.

The enzyme catalyses UDP-N-acetyl-alpha-D-glucosamine = UDP-N-acetyl-alpha-D-mannosamine. The protein operates within capsule biogenesis; capsule polysaccharide biosynthesis. With respect to regulation, activated by UDP-GlcNAc and inhibited by 2-acetamidoglucal and UDP. Activity is strongly decreased in the presence of Co(2+) and abolished in the presence of Mn(2+) or Zn(2+). Catalyzes the interconversion between UDP-N-acetylglucosamine (UDP-GlcNAc) and UDP-N-acetylmannosamine (UDP-ManNAc). Involved in the biosynthesis of the capsular polysaccharides. In vitro, can also use several chemoenzymatically synthesized UDP-ManNAc derivatives as substrates, with lower efficiency. The sequence is that of UDP-N-acetylglucosamine 2-epimerase from Neisseria meningitidis serogroup A / serotype 4A (strain DSM 15465 / Z2491).